Consider the following 420-residue polypeptide: MSFIQSQDPAIWDAIQAETTRQQDGLEMIASENYTSPAIMEAVGSILTNKYAEGYPGRRYYGGCEHVDVVETIAIDRAKELFGAEAANVQPHSGSQANAAVYLSCLEVGDTVLGLDLAQGGHLTHGMKLNMSGRLYNFVNYGVDKVNHRLDFDQIVKLAREHKPKLIVAGASAYPREIPHDRFKEIADEVGAKLMVDMAHYAGLVAAKIHNSPVPYADYVTTTTHKTLRGPRSGLIMCKEEHLKLVNRNVFPGTQGGPLMHVVAGKAICFAEAMTEEYAHYGQAVVDNAKTLADTLLSCGLRLVSGGTDNHLMLVDVTAVDLGGKKAEAVLDACGITVNMNMIPFDQRKPMDPSGIRIGTPALTTRGMGGDEMKRIGQWIYNALSDSDNAALHESIRTEIREMVQAFPVPAAAESPATVA.

Residues L117 and G121–L123 contribute to the (6S)-5,6,7,8-tetrahydrofolate site. Position 226 is an N6-(pyridoxal phosphate)lysine (K226).

The protein belongs to the SHMT family. Homodimer. Pyridoxal 5'-phosphate is required as a cofactor.

The protein resides in the cytoplasm. The enzyme catalyses (6R)-5,10-methylene-5,6,7,8-tetrahydrofolate + glycine + H2O = (6S)-5,6,7,8-tetrahydrofolate + L-serine. It participates in one-carbon metabolism; tetrahydrofolate interconversion. It functions in the pathway amino-acid biosynthesis; glycine biosynthesis; glycine from L-serine: step 1/1. Catalyzes the reversible interconversion of serine and glycine with tetrahydrofolate (THF) serving as the one-carbon carrier. This reaction serves as the major source of one-carbon groups required for the biosynthesis of purines, thymidylate, methionine, and other important biomolecules. Also exhibits THF-independent aldolase activity toward beta-hydroxyamino acids, producing glycine and aldehydes, via a retro-aldol mechanism. The protein is Serine hydroxymethyltransferase of Rhodopirellula baltica (strain DSM 10527 / NCIMB 13988 / SH1).